Consider the following 473-residue polypeptide: Photosystem II CP43 reaction center protein (473 aa).

Residues 1–14 (MKTLYSLRRFYPVE) constitute a propeptide that is removed on maturation. Position 15 is an N-acetylthreonine (T15). T15 is modified (phosphothreonine). The next 5 helical transmembrane spans lie at 69-93 (LFEVAHFVPEKPMYEQGLILLPHLA), 134-155 (LLGPETLEESFPFFGYVWKDRN), 178-200 (KALYFGGVYDTWAPGGGDVRKIT), 255-275 (KPFAWARRAFVWSGEAYLSYS), and 291-312 (WFNNTAYPSEFYGPTGPEASQA). E367 serves as a coordination point for [CaMn4O5] cluster. The chain crosses the membrane as a helical span at residues 447-471 (RARAAAAGFEKGIDRDFEPVLSMTP).

This sequence belongs to the PsbB/PsbC family. PsbC subfamily. As to quaternary structure, PSII is composed of 1 copy each of membrane proteins PsbA, PsbB, PsbC, PsbD, PsbE, PsbF, PsbH, PsbI, PsbJ, PsbK, PsbL, PsbM, PsbT, PsbX, PsbY, PsbZ, Psb30/Ycf12, at least 3 peripheral proteins of the oxygen-evolving complex and a large number of cofactors. It forms dimeric complexes. Binds multiple chlorophylls and provides some of the ligands for the Ca-4Mn-5O cluster of the oxygen-evolving complex. It may also provide a ligand for a Cl- that is required for oxygen evolution. PSII binds additional chlorophylls, carotenoids and specific lipids. serves as cofactor.

It is found in the plastid. Its subcellular location is the chloroplast thylakoid membrane. One of the components of the core complex of photosystem II (PSII). It binds chlorophyll and helps catalyze the primary light-induced photochemical processes of PSII. PSII is a light-driven water:plastoquinone oxidoreductase, using light energy to abstract electrons from H(2)O, generating O(2) and a proton gradient subsequently used for ATP formation. This Drimys granadensis protein is Photosystem II CP43 reaction center protein.